Reading from the N-terminus, the 92-residue chain is Cell division topological specificity factor (92 aa).

Belongs to the MinE family.

Functionally, prevents the cell division inhibition by proteins MinC and MinD at internal division sites while permitting inhibition at polar sites. This ensures cell division at the proper site by restricting the formation of a division septum at the midpoint of the long axis of the cell. The polypeptide is Cell division topological specificity factor (Syntrophobacter fumaroxidans (strain DSM 10017 / MPOB)).